A 165-amino-acid chain; its full sequence is Phosphopantetheine adenylyltransferase (165 aa).

Residue threonine 9 coordinates substrate. ATP contacts are provided by residues 9–10 (TF) and histidine 17. Positions 41, 78, and 92 each coordinate substrate. Residues 93 to 95 (GLR), glutamate 103, and 128 to 134 (RQAIASK) each bind ATP.

It belongs to the bacterial CoaD family. In terms of assembly, homohexamer. Mg(2+) serves as cofactor.

The protein resides in the cytoplasm. The enzyme catalyses (R)-4'-phosphopantetheine + ATP + H(+) = 3'-dephospho-CoA + diphosphate. The protein operates within cofactor biosynthesis; coenzyme A biosynthesis; CoA from (R)-pantothenate: step 4/5. In terms of biological role, reversibly transfers an adenylyl group from ATP to 4'-phosphopantetheine, yielding dephospho-CoA (dPCoA) and pyrophosphate. The chain is Phosphopantetheine adenylyltransferase from Ruegeria pomeroyi (strain ATCC 700808 / DSM 15171 / DSS-3) (Silicibacter pomeroyi).